We begin with the raw amino-acid sequence, 163 residues long: MAGPVPPHPGLAVRAAALHPAPLRIFPGLAELPDLSRGSAARPALAQSLPGIGCGPRDPPASLPAPRRLSGLCARRRSQASLSAGVARADAPLCSGFRAGHACGTGTQPQPTLSSRSSSLTSAEVQLPQFLAQVDNYRHKPLKLECPVAGISIDLSQLSLQLQ.

As to expression, expressed in keratinocytes.

This is an uncharacterized protein from Homo sapiens (Human).